A 214-amino-acid polypeptide reads, in one-letter code: Probable transaldolase (214 aa).

Residue Lys83 is the Schiff-base intermediate with substrate of the active site.

This sequence belongs to the transaldolase family. Type 3B subfamily.

It localises to the cytoplasm. The enzyme catalyses D-sedoheptulose 7-phosphate + D-glyceraldehyde 3-phosphate = D-erythrose 4-phosphate + beta-D-fructose 6-phosphate. Its pathway is carbohydrate degradation; pentose phosphate pathway; D-glyceraldehyde 3-phosphate and beta-D-fructose 6-phosphate from D-ribose 5-phosphate and D-xylulose 5-phosphate (non-oxidative stage): step 2/3. Its function is as follows. Transaldolase is important for the balance of metabolites in the pentose-phosphate pathway. The protein is Probable transaldolase of Desulfotalea psychrophila (strain LSv54 / DSM 12343).